Reading from the N-terminus, the 147-residue chain is Myoglobin (147 aa).

The region spanning 2–137 (ADFEMVLKHW…VMTTIIADIE (136 aa)) is the Globin domain. A nitrite-binding site is contributed by H60. Residue H60 coordinates O2. H89 lines the heme b pocket.

The protein belongs to the globin family. As to quaternary structure, monomeric.

The protein localises to the cytoplasm. It localises to the sarcoplasm. It carries out the reaction Fe(III)-heme b-[protein] + nitric oxide + H2O = Fe(II)-heme b-[protein] + nitrite + 2 H(+). The enzyme catalyses H2O2 + AH2 = A + 2 H2O. In terms of biological role, monomeric heme protein which primary function is to store oxygen and facilitate its diffusion within muscle tissues. Reversibly binds oxygen through a pentacoordinated heme iron and enables its timely and efficient release as needed during periods of heightened demand. Depending on the oxidative conditions of tissues and cells, and in addition to its ability to bind oxygen, it also has a nitrite reductase activity whereby it regulates the production of bioactive nitric oxide. Under stress conditions, like hypoxia and anoxia, it also protects cells against reactive oxygen species thanks to its pseudoperoxidase activity. This Makaira nigricans (Atlantic blue marlin) protein is Myoglobin (mb).